We begin with the raw amino-acid sequence, 349 residues long: Cytoplasmic tRNA 2-thiolation protein 2 (349 aa).

It belongs to the CTU2/NCS2 family.

It is found in the cytoplasm. It participates in tRNA modification; 5-methoxycarbonylmethyl-2-thiouridine-tRNA biosynthesis. Its function is as follows. Plays a central role in 2-thiolation of mcm(5)S(2)U at tRNA wobble positions of tRNA(Lys), tRNA(Glu) and tRNA(Gln). May act by forming a heterodimer with tut-1/ctu-1 that ligates sulfur from thiocarboxylated urm-1 onto the uridine of tRNAs at wobble position. This is Cytoplasmic tRNA 2-thiolation protein 2 from Caenorhabditis briggsae.